A 459-amino-acid chain; its full sequence is Interleukin-7 receptor subunit alpha (459 aa).

A signal peptide spans methionine 1–glycine 20. Residues glutamate 21 to aspartate 239 lie on the Extracellular side of the membrane. A disulfide bridge connects residues cysteine 42 and cysteine 57. N-linked (GlcNAc...) asparagine glycans are attached at residues asparagine 49 and asparagine 65. 2 cysteine pairs are disulfide-bonded: cysteine 74–cysteine 82 and cysteine 108–cysteine 118. The Fibronectin type-III domain occupies alanine 131–isoleucine 231. Asparagine 151 and asparagine 182 each carry an N-linked (GlcNAc...) asparagine glycan. The short motif at tryptophan 217 to serine 221 is the WSXWS motif element. Residues asparagine 232 and asparagine 233 are each glycosylated (N-linked (GlcNAc...) asparagine). A helical membrane pass occupies residues proline 240–tryptophan 264. Topologically, residues lysine 265 to glutamine 459 are cytoplasmic. The short motif at valine 272–lysine 280 is the Box 1 motif element. Threonine 282 is subject to Phosphothreonine; by PKC.

The protein belongs to the type I cytokine receptor family. Type 4 subfamily. The IL7 receptor is a heterodimer of IL7R and IL2RG. The TSLP receptor is a heterodimer of CRLF2 and IL7R. Interacts with CD53. N-glycosylated IL-7Ralpha binds IL7 300-fold more tightly than the unglycosylated form. In terms of processing, ubiquitinated by MARCHF8; leading to lysosomal degradation.

The protein resides in the cell membrane. It is found in the secreted. In terms of biological role, receptor for interleukin-7. Also acts as a receptor for thymic stromal lymphopoietin (TSLP). The protein is Interleukin-7 receptor subunit alpha (IL7R) of Homo sapiens (Human).